Consider the following 201-residue polypeptide: Small ribosomal subunit protein uS4c (201 aa).

The interval 17–44 is disordered; the sequence is ALPGLTNKKPRTGSDLRNQSRSGKKSQY. The S4 RNA-binding domain occupies 89 to 149; sequence MRLDNILFRL…DEQKSRALIQ (61 aa).

This sequence belongs to the universal ribosomal protein uS4 family. In terms of assembly, part of the 30S ribosomal subunit. Contacts protein S5. The interaction surface between S4 and S5 is involved in control of translational fidelity.

The protein localises to the plastid. It localises to the chloroplast. Functionally, one of the primary rRNA binding proteins, it binds directly to 16S rRNA where it nucleates assembly of the body of the 30S subunit. Its function is as follows. With S5 and S12 plays an important role in translational accuracy. In Solanum bulbocastanum (Wild potato), this protein is Small ribosomal subunit protein uS4c (rps4).